A 126-amino-acid polypeptide reads, in one-letter code: Holo-[acyl-carrier-protein] synthase (126 aa).

Mg(2+) contacts are provided by Asp9 and Glu58.

Belongs to the P-Pant transferase superfamily. AcpS family. Mg(2+) is required as a cofactor.

Its subcellular location is the cytoplasm. The enzyme catalyses apo-[ACP] + CoA = holo-[ACP] + adenosine 3',5'-bisphosphate + H(+). In terms of biological role, transfers the 4'-phosphopantetheine moiety from coenzyme A to a Ser of acyl-carrier-protein. In Escherichia coli O17:K52:H18 (strain UMN026 / ExPEC), this protein is Holo-[acyl-carrier-protein] synthase.